We begin with the raw amino-acid sequence, 326 residues long: Glyceraldehyde-3-phosphate dehydrogenase, cytosolic (326 aa).

Residues 2-3 (RI), Asp24, and Arg71 contribute to the NAD(+) site. Residues 142–144 (SCT), Thr173, 202–203 (TG), and Arg225 contribute to the D-glyceraldehyde 3-phosphate site. Cys143 serves as the catalytic Nucleophile. Asn307 contacts NAD(+).

This sequence belongs to the glyceraldehyde-3-phosphate dehydrogenase family.

It is found in the cytoplasm. The enzyme catalyses D-glyceraldehyde 3-phosphate + phosphate + NAD(+) = (2R)-3-phospho-glyceroyl phosphate + NADH + H(+). The protein operates within carbohydrate degradation; glycolysis; pyruvate from D-glyceraldehyde 3-phosphate: step 1/5. In terms of biological role, key enzyme in glycolysis that catalyzes the first step of the pathway by converting D-glyceraldehyde 3-phosphate (G3P) into 3-phospho-D-glyceroyl phosphate. Essential for the maintenance of cellular ATP levels and carbohydrate metabolism. The chain is Glyceraldehyde-3-phosphate dehydrogenase, cytosolic (GAPC) from Nicotiana tabacum (Common tobacco).